Here is a 232-residue protein sequence, read N- to C-terminus: Large ribosomal subunit protein uL1 (232 aa).

It belongs to the universal ribosomal protein uL1 family. Part of the 50S ribosomal subunit.

Functionally, binds directly to 23S rRNA. The L1 stalk is quite mobile in the ribosome, and is involved in E site tRNA release. Its function is as follows. Protein L1 is also a translational repressor protein, it controls the translation of the L11 operon by binding to its mRNA. The protein is Large ribosomal subunit protein uL1 of Colwellia psychrerythraea (strain 34H / ATCC BAA-681) (Vibrio psychroerythus).